A 1946-amino-acid polypeptide reads, in one-letter code: 1,3-beta-glucan synthase component (1946 aa).

2 disordered regions span residues 1–127 and 152–198; these read MSGY…FSDF and YGEG…KEPY. Low complexity-rich tracts occupy residues 24–34, 43–60, and 91–109; these read GYYQDDQYYDQ, GDHA…QGDG, and DDYY…NQGY. Polar residues predominate over residues 165–180; the sequence is QLSYGGNRSSGASTPN. N171 and N290 each carry an N-linked (GlcNAc...) asparagine glycan. The interval 297 to 316 is disordered; that stretch reads KRKAKKGKKKGGEAGNEAET. 6 consecutive transmembrane segments (helical) span residues 489–509, 537–557, 576–596, 618–638, 675–695, and 734–754; these read WFHL…MFWF, FSIV…ATLA, LLFL…VFMF, IGIV…VMPL, FGLW…YLTL, and IVLI…TYLF. 2 N-linked (GlcNAc...) asparagine glycosylation sites follow: N1017 and N1312. Helical transmembrane passes span 1356–1376, 1413–1433, 1500–1520, 1523–1543, and 1615–1635; these read NMFI…IGAL, CIIS…VQEL, FAGQ…FATS, WQPA…SPFL, and IFLT…VAYL. N1649 carries N-linked (GlcNAc...) asparagine glycosylation. 5 consecutive transmembrane segments (helical) span residues 1667–1687, 1703–1723, 1738–1758, 1803–1823, and 1864–1884; these read LAVV…AMFG, FGPV…IIFF, LAGI…IVSL, FSAD…LILI, and AILY…PGVI. N1918 carries N-linked (GlcNAc...) asparagine glycosylation. Residues 1920–1946 form a disordered region; sequence TEGKTETGTKAGGADASATDASKLRLF. The span at 1925–1940 shows a compositional bias: low complexity; the sequence is ETGTKAGGADASATDA.

It belongs to the glycosyltransferase 48 family. Component of the 1,3-beta-glucan synthase (GS) complex composed of a catalytic subunit GLS1 and a regulatory subunit RHO1.

It is found in the membrane. The protein resides in the cell membrane. It catalyses the reaction [(1-&gt;3)-beta-D-glucosyl](n) + UDP-alpha-D-glucose = [(1-&gt;3)-beta-D-glucosyl](n+1) + UDP + H(+). Its activity is regulated as follows. Activated by iron ions. Inhibited by manganese, copper and zinc ions. Functionally, catalytic subunit of the 1,3-beta-glucan synthase (GS). Synthesizes 1,3-beta-glucan, a major structural component of the fungal cell wall. Involved in cell wall synthesis, maintenance and remodeling. This is 1,3-beta-glucan synthase component from Cordyceps militaris (strain CM01) (Caterpillar fungus).